The sequence spans 321 residues: L-carnitine dehydrogenase (321 aa).

14-19 (GSGVIG) is an NAD(+) binding site. Residues 317–321 (MTFSE) form an important for catalytic activity region.

Belongs to the 3-hydroxyacyl-CoA dehydrogenase family. L-carnitine dehydrogenase subfamily. In terms of assembly, homodimer.

Its subcellular location is the cytoplasm. The enzyme catalyses carnitine + NAD(+) = 3-dehydrocarnitine + NADH + H(+). The protein operates within amine and polyamine metabolism; carnitine metabolism. Its activity is regulated as follows. The enzyme activity is strongly inhibited by Ag(+), Ni(+), Hg(+), and p-chloromercuribenzoate, and partially inhibited by Li(+), Ca(2+), Mn(2+), Co(2+), Cu(2+), and Zn(2+). Functionally, catalyzes the NAD(+)-dependent oxidation of L-carnitine to 3-dehydrocarnitine. Is specific for L-carnitine and NAD(+) as substrates since D-carnitine, other carnitine analogs such as choline and betaine, and NADP(+) are not substrates. Despite a high similarity to 3-hydroxyacyl-CoA dehydrogenases, cannot dehydrogenate 3-hydroxybutylate and 3-hydroxybutyl-CoA. Is probably involved in a L-carnitine degradation pathway that allows Pseudomonas sp. strain NBRC 13558 to grow on L-carnitine as the sole source of carbon and nitrogen. The sequence is that of L-carnitine dehydrogenase from Pseudomonas sp.